We begin with the raw amino-acid sequence, 398 residues long: MSSTPHDPFYSSPFGPFYRRHAPYMVQPEYRIYEMNKRLQTRTEDSDNLWWDAFATEFFEDDATLTLSFCLEDGPKRYTIGRTLIPRYFSTVFEGGVTDLYYILKHSKESYHNSSITVDCDQCTMVTQHGKPMFTKVCTEGRLILEFTFDDLMRIKTWHFTIRQYRELLPRSILAMHAQDPQVLEQLSKNITRMGLTNFTLNYLRLCVILEPMQELMSRHKTYNLSPRDCLKTCLFQKWQRMVAPPAEPTRQTTTKRRKRKNSTNNASNSNAGNNATSAYNRKKVPAASLNLSNQVPFPTTKKCIGDKTRVRRNYRGIRNGLDVMVVGEPTLMGGEFGDEDERLITRLENTQYDAANGMDDEEDFNSSPALGNNSPWNSKPPPNAETKSDNPTQQASQ.

2 disordered regions span residues 245-280 (PPAEPTRQTTTKRRKRKNSTNNASNSNAGNNATSAY) and 354-398 (DAAN…QASQ). Positions 263–279 (STNNASNSNAGNNATSA) are enriched in low complexity. The LIM interaction domain (LID) domain maps to 323–362 (DVMVVGEPTLMGGEFGDEDERLITRLENTQYDAANGMDDE).

Belongs to the LDB family. In terms of tissue distribution, expressed in adult brain, lung, spleen and kidney. Isoform b is generally expressed at a higher level than isoform a.

It is found in the nucleus. In terms of biological role, binds to the LIM domain of a wide variety of LIM domain-containing transcription factors. The polypeptide is LIM domain-binding protein 2 (Xenopus laevis (African clawed frog)).